A 361-amino-acid chain; its full sequence is Methylthioribose-1-phosphate isomerase (361 aa).

The active-site Proton donor is the aspartate 245.

This sequence belongs to the eIF-2B alpha/beta/delta subunits family. MtnA subfamily.

It is found in the cytoplasm. It localises to the nucleus. It catalyses the reaction 5-(methylsulfanyl)-alpha-D-ribose 1-phosphate = 5-(methylsulfanyl)-D-ribulose 1-phosphate. Its pathway is amino-acid biosynthesis; L-methionine biosynthesis via salvage pathway; L-methionine from S-methyl-5-thio-alpha-D-ribose 1-phosphate: step 1/6. Functionally, catalyzes the interconversion of methylthioribose-1-phosphate (MTR-1-P) into methylthioribulose-1-phosphate (MTRu-1-P). The sequence is that of Methylthioribose-1-phosphate isomerase from Monosiga brevicollis (Choanoflagellate).